The following is a 434-amino-acid chain: Histidinol dehydrogenase (434 aa).

Residues Y130, Q188, and N211 each coordinate NAD(+). 3 residues coordinate substrate: S237, Q259, and H262. Positions 259 and 262 each coordinate Zn(2+). Active-site proton acceptor residues include E326 and H327. Residues H327, D360, E414, and H419 each contribute to the substrate site. D360 contributes to the Zn(2+) binding site. Residue H419 coordinates Zn(2+).

Belongs to the histidinol dehydrogenase family. In terms of assembly, homodimer. Zn(2+) is required as a cofactor. Mn(2+) serves as cofactor.

The catalysed reaction is L-histidinol + 2 NAD(+) + H2O = L-histidine + 2 NADH + 3 H(+). The protein operates within amino-acid biosynthesis; L-histidine biosynthesis; L-histidine from 5-phospho-alpha-D-ribose 1-diphosphate: step 9/9. Activity is lost when the metal is removed through urea denaturation or chelation, and can be regained by addition of metal. Catalyzes the sequential NAD-dependent oxidations of L-histidinol to L-histidinaldehyde and then to L-histidine. The protein is Histidinol dehydrogenase (hisD) of Salmonella typhimurium (strain LT2 / SGSC1412 / ATCC 700720).